Here is a 171-residue protein sequence, read N- to C-terminus: Myosin regulatory light chain 12B (171 aa).

Threonine 18 is modified (phosphothreonine; by MLCK and ZIPK/DAPK3). Serine 19 carries the post-translational modification Phosphoserine; by MLCK and ZIPK/DAPK3. EF-hand domains lie at 28–63, 97–132, and 133–168; these read SQIQ…LGKN, DPED…MGDR, and FTDE…GAKD. Aspartate 41, asparagine 43, aspartate 45, and aspartate 52 together coordinate Ca(2+).

As to quaternary structure, myosin is a hexamer of 2 heavy chains and 4 light chains: interacts with myosin heavy chain MYO19. In terms of processing, phosphorylation increases the actin-activated myosin ATPase activity and thereby regulates the contractile activity. It is required to generate the driving force in the migration of the cells but not necessary for localization of myosin-2 at the leading edge. Phosphorylation is reduced following epigallocatechin-3-O-gallate treatment.

In terms of biological role, myosin regulatory subunit that plays an important role in regulation of both smooth muscle and nonmuscle cell contractile activity via its phosphorylation. Phosphorylation triggers actin polymerization in vascular smooth muscle. Implicated in cytokinesis, receptor capping, and cell locomotion. The chain is Myosin regulatory light chain 12B (MYL12B) from Bos taurus (Bovine).